The primary structure comprises 324 residues: Acetyl-coenzyme A carboxylase carboxyl transferase subunit alpha (324 aa).

Residues 37 to 291 (KLEKRLDKLK…REFIIQEWLR (255 aa)) form the CoA carboxyltransferase C-terminal domain.

It belongs to the AccA family. Acetyl-CoA carboxylase is a heterohexamer composed of biotin carboxyl carrier protein (AccB), biotin carboxylase (AccC) and two subunits each of ACCase subunit alpha (AccA) and ACCase subunit beta (AccD).

It is found in the cytoplasm. It carries out the reaction N(6)-carboxybiotinyl-L-lysyl-[protein] + acetyl-CoA = N(6)-biotinyl-L-lysyl-[protein] + malonyl-CoA. Its pathway is lipid metabolism; malonyl-CoA biosynthesis; malonyl-CoA from acetyl-CoA: step 1/1. Component of the acetyl coenzyme A carboxylase (ACC) complex. First, biotin carboxylase catalyzes the carboxylation of biotin on its carrier protein (BCCP) and then the CO(2) group is transferred by the carboxyltransferase to acetyl-CoA to form malonyl-CoA. This chain is Acetyl-coenzyme A carboxylase carboxyl transferase subunit alpha, found in Chlamydia pneumoniae (Chlamydophila pneumoniae).